A 126-amino-acid polypeptide reads, in one-letter code: Glycine cleavage system H protein (126 aa).

Residues 21–103 (TVTVGISDHA…YESGWIARIK (83 aa)) enclose the Lipoyl-binding domain. At Lys-62 the chain carries N6-lipoyllysine.

It belongs to the GcvH family. In terms of assembly, the glycine cleavage system is composed of four proteins: P, T, L and H. (R)-lipoate is required as a cofactor.

Its function is as follows. The glycine cleavage system catalyzes the degradation of glycine. The H protein shuttles the methylamine group of glycine from the P protein to the T protein. In Aliivibrio fischeri (strain MJ11) (Vibrio fischeri), this protein is Glycine cleavage system H protein.